We begin with the raw amino-acid sequence, 447 residues long: Coagulation factor VII (447 aa).

A signal peptide spans 1–23; that stretch reads MLSQAWALALLCFLLSLWGSLPA. Residues 24 to 40 constitute a propeptide that is removed on maturation; the sequence is VFLPQEQALSILHRPRR. The region spanning 41–85 is the Gla domain; the sequence is ANGFLEELLPGSLERECREELCSFEEAHEIFRNEERTRQFWVSYN. 4-carboxyglutamate occurs at positions 46, 47, 54, 56, 59, 60, 65, 66, 69, 74, and 75. A disulfide bond links C57 and C62. In terms of domain architecture, EGF-like 1; calcium-binding spans 86–122; that stretch reads DGDQCASSPCQNGGSCEDQLRSYICFCPDGFEGRNCE. 10 cysteine pairs are disulfide-bonded: C90–C101, C95–C110, C112–C121, C131–C142, C138–C152, C154–C167, C175–C302, C199–C204, C218–C234, and C350–C369. Residue S92 is glycosylated (O-linked (Glc...) serine). S92 carries O-linked (Glc...) serine; alternate glycosylation. A glycan (O-linked (Xyl...) serine; alternate) is linked at S92. A glycan (O-linked (Fuc) serine) is linked at S100. One can recognise an EGF-like 2 domain in the interval 127–168; the sequence is SQLICANDNGGCEQYCGADPGAGRFCWCHEGYALQADGVSCA. The N-linked (GlcNAc...) asparagine glycan is linked to N185. Residues 193–432 enclose the Peptidase S1 domain; that stretch reads IVGGHVCPKG…YTAWLRQLMG (240 aa). H233 serves as the catalytic Charge relay system. N243 carries an N-linked (GlcNAc...) asparagine glycan. Residue D282 is the Charge relay system of the active site. D378 contributes to the substrate binding site. C380 and C408 are disulfide-bonded. Catalysis depends on S384, which acts as the Charge relay system.

The protein belongs to the peptidase S1 family. As to quaternary structure, heterodimer of a light chain and a heavy chain linked by a disulfide bond. In terms of processing, the vitamin K-dependent, enzymatic carboxylation of some glutamate residues allows the modified protein to bind calcium. Post-translationally, O-glycosylated. O-fucosylated by POFUT1 on a conserved serine or threonine residue found in the consensus sequence C2-X(4,5)-[S/T]-C3 of EGF domains, where C2 and C3 are the second and third conserved cysteines. Can be either O-glucosylated or O-xylosylated at Ser-92 by POGLUT1. Plasma.

Its subcellular location is the secreted. It carries out the reaction Selective cleavage of Arg-|-Ile bond in factor X to form factor Xa.. Initiates the extrinsic pathway of blood coagulation. Serine protease that circulates in the blood in a zymogen form. Factor VII is converted to factor VIIa by factor Xa, factor XIIa, factor IXa, or thrombin by minor proteolysis. In the presence of tissue factor and calcium ions, factor VIIa then converts factor X to factor Xa by limited proteolysis. Factor VIIa also converts factor IX to factor IXa in the presence of tissue factor and calcium. This chain is Coagulation factor VII (F7), found in Bos taurus (Bovine).